Consider the following 257-residue polypeptide: Glutamate racemase (257 aa).

Substrate contacts are provided by residues Asp12 to Ser13 and Tyr44 to Gly45. Cys75 functions as the Proton donor/acceptor in the catalytic mechanism. Substrate is bound at residue Asn76 to Thr77. The Proton donor/acceptor role is filled by Cys185. Thr186–His187 serves as a coordination point for substrate.

This sequence belongs to the aspartate/glutamate racemases family.

It carries out the reaction L-glutamate = D-glutamate. It functions in the pathway cell wall biogenesis; peptidoglycan biosynthesis. In terms of biological role, provides the (R)-glutamate required for cell wall biosynthesis. This Clostridium botulinum (strain 657 / Type Ba4) protein is Glutamate racemase.